We begin with the raw amino-acid sequence, 174 residues long: I-Kappa-B like protein C1 (174 aa).

2 ANK repeats span residues 56–88 (RGRQ…DINA) and 93–123 (TGNS…NLGA).

Belongs to the polydnaviridae I-Kappa-B-like protein family.

Its function is as follows. Suppresses the host immune response through NF-kappa-B inactivation. Possesses ankyrin repeat domains required for NF-kappa-B binding but lacks the regulatory regions required for dissociation from NF-kappa-B and degradation. Therefore, prevents host NF-kappa-B release and subsequent activation. This Microplitis demolitor bracovirus (isolate Webb) (MdBV) protein is I-Kappa-B like protein C1 (C1).